The primary structure comprises 336 residues: Adenosine deaminase (336 aa).

Residues His-15 and His-17 each coordinate Zn(2+). 3 residues coordinate substrate: His-17, Asp-19, and Gly-172. His-199 is a binding site for Zn(2+). Glu-202 (proton donor) is an active-site residue. Asp-279 is a Zn(2+) binding site.

Belongs to the metallo-dependent hydrolases superfamily. Adenosine and AMP deaminases family. Adenosine deaminase subfamily. Zn(2+) is required as a cofactor.

It carries out the reaction adenosine + H2O + H(+) = inosine + NH4(+). The catalysed reaction is 2'-deoxyadenosine + H2O + H(+) = 2'-deoxyinosine + NH4(+). Its function is as follows. Catalyzes the hydrolytic deamination of adenosine and 2-deoxyadenosine. This chain is Adenosine deaminase, found in Streptococcus thermophilus (strain ATCC BAA-491 / LMD-9).